The chain runs to 220 residues: uncharacterized protein (220 aa).

7 helical membrane-spanning segments follow: residues 25 to 45, 50 to 70, 74 to 94, 105 to 125, 135 to 155, 158 to 178, and 196 to 216; these read YFLL…SMSL, PGLI…YKLS, LGIL…GPIL, IVVL…AYVL, SGTI…SFFF, PMLY…GILY, and VSIF…FSIL.

It belongs to the BI1 family.

The protein localises to the cell membrane. This is an uncharacterized protein from Pasteurella multocida (strain Pm70).